A 402-amino-acid polypeptide reads, in one-letter code: MMRSVDVYVKTLGPPVRSILYSIFTSQQKPSSLPSLPFHFSLRSSSNIPTRCFSNVVAKSNSPIYDFQGFRNLFTERAISSSTTTPVASAQPQQLQNQNQHPAEVDEEISMGLEDEAKLSIPVRAYFFSTSVDLRSLIEQNKQNFIPPTSRMTNYVVLKFGNHSDPTDTTRGRISGSESIYMVVFHYGSIVLFNVREHEVDEYLKVVERHASGLLPEMRKDEYEVRENPNLDTWMEVGRDFIRLQFLNTDGIRTIGCVLGQSIALDYYGRQVDGMVAEFTEINRQLEITGTFTMKRKKLFQLVGKANVILADVILKLGLFERSDIAWKDAKYGQIWEFLRDEFELTQSFANLDYKLKFVEHNVRFLQEILQNRKSATLEWLIIILISMEIAISFYNMSRASL.

The chain crosses the membrane as a helical span at residues 375 to 395; sequence SATLEWLIIILISMEIAISFY.

The protein belongs to the RMD1/sif2 family. Highly expressed in germinating seeds and developing seedlings. Also present at low levels in seedlings, roots, leaves, stems and flowers, and barely in siliques.

The protein resides in the mitochondrion membrane. It localises to the mitochondrion. Its function is as follows. Mediates abscisic acid (ABA) signal transduction through mitochondrial retrograde regulation involving ABI4 during seed germination and seedling growth, and leading to the production of reactive oxygen species (ROS) by the alternative respiratory pathway. Required for the maintenance of mitochondrial structure. The sequence is that of Protein RETARDED ROOT GROWTH-LIKE from Arabidopsis thaliana (Mouse-ear cress).